The chain runs to 174 residues: 2-C-methyl-D-erythritol 2,4-cyclodiphosphate synthase (174 aa).

3 residues coordinate a divalent metal cation: D13, H15, and H61. 13–15 lines the 4-CDP-2-C-methyl-D-erythritol 2-phosphate pocket; the sequence is DAH. 4-CDP-2-C-methyl-D-erythritol 2-phosphate-binding positions include 75 to 77, 149 to 152, F156, and R159; these read DIG and TTTD.

The protein belongs to the IspF family. As to quaternary structure, homotrimer. A divalent metal cation serves as cofactor.

The enzyme catalyses 4-CDP-2-C-methyl-D-erythritol 2-phosphate = 2-C-methyl-D-erythritol 2,4-cyclic diphosphate + CMP. It participates in isoprenoid biosynthesis; isopentenyl diphosphate biosynthesis via DXP pathway; isopentenyl diphosphate from 1-deoxy-D-xylulose 5-phosphate: step 4/6. Functionally, involved in the biosynthesis of isopentenyl diphosphate (IPP) and dimethylallyl diphosphate (DMAPP), two major building blocks of isoprenoid compounds. Catalyzes the conversion of 4-diphosphocytidyl-2-C-methyl-D-erythritol 2-phosphate (CDP-ME2P) to 2-C-methyl-D-erythritol 2,4-cyclodiphosphate (ME-CPP) with a corresponding release of cytidine 5-monophosphate (CMP). The sequence is that of 2-C-methyl-D-erythritol 2,4-cyclodiphosphate synthase from Bifidobacterium longum subsp. infantis (strain ATCC 15697 / DSM 20088 / JCM 1222 / NCTC 11817 / S12).